The chain runs to 57 residues: Large ribosomal subunit protein bL32 (57 aa).

The protein belongs to the bacterial ribosomal protein bL32 family.

This is Large ribosomal subunit protein bL32 from Lysinibacillus sphaericus (strain C3-41).